We begin with the raw amino-acid sequence, 282 residues long: Putative 4-diphosphocytidyl-2-C-methyl-D-erythritol kinase (282 aa).

K9 is an active-site residue. 93–103 (PVSAGLAGGSA) contributes to the ATP binding site. D135 is an active-site residue.

This sequence belongs to the GHMP kinase family. IspE subfamily.

It catalyses the reaction 4-CDP-2-C-methyl-D-erythritol + ATP = 4-CDP-2-C-methyl-D-erythritol 2-phosphate + ADP + H(+). Catalyzes the phosphorylation of the position 2 hydroxy group of 4-diphosphocytidyl-2C-methyl-D-erythritol. The chain is Putative 4-diphosphocytidyl-2-C-methyl-D-erythritol kinase from Staphylococcus aureus (strain MSSA476).